The chain runs to 356 residues: UDP-N-acetylglucosamine--N-acetylmuramyl-(pentapeptide) pyrophosphoryl-undecaprenol N-acetylglucosamine transferase (356 aa).

Residues 11–13 (TGG), N122, S186, and Q287 each bind UDP-N-acetyl-alpha-D-glucosamine.

Belongs to the glycosyltransferase 28 family. MurG subfamily.

Its subcellular location is the cell inner membrane. It catalyses the reaction di-trans,octa-cis-undecaprenyl diphospho-N-acetyl-alpha-D-muramoyl-L-alanyl-D-glutamyl-meso-2,6-diaminopimeloyl-D-alanyl-D-alanine + UDP-N-acetyl-alpha-D-glucosamine = di-trans,octa-cis-undecaprenyl diphospho-[N-acetyl-alpha-D-glucosaminyl-(1-&gt;4)]-N-acetyl-alpha-D-muramoyl-L-alanyl-D-glutamyl-meso-2,6-diaminopimeloyl-D-alanyl-D-alanine + UDP + H(+). The protein operates within cell wall biogenesis; peptidoglycan biosynthesis. In terms of biological role, cell wall formation. Catalyzes the transfer of a GlcNAc subunit on undecaprenyl-pyrophosphoryl-MurNAc-pentapeptide (lipid intermediate I) to form undecaprenyl-pyrophosphoryl-MurNAc-(pentapeptide)GlcNAc (lipid intermediate II). In Anaplasma marginale (strain St. Maries), this protein is UDP-N-acetylglucosamine--N-acetylmuramyl-(pentapeptide) pyrophosphoryl-undecaprenol N-acetylglucosamine transferase.